Here is a 104-residue protein sequence, read N- to C-terminus: Large ribosomal subunit protein uL24 (104 aa).

This sequence belongs to the universal ribosomal protein uL24 family. In terms of assembly, part of the 50S ribosomal subunit.

Functionally, one of two assembly initiator proteins, it binds directly to the 5'-end of the 23S rRNA, where it nucleates assembly of the 50S subunit. Its function is as follows. One of the proteins that surrounds the polypeptide exit tunnel on the outside of the subunit. This is Large ribosomal subunit protein uL24 from Clostridium beijerinckii (strain ATCC 51743 / NCIMB 8052) (Clostridium acetobutylicum).